A 195-amino-acid polypeptide reads, in one-letter code: Coiled-coil domain-containing protein 184 (195 aa).

Positions 39–68 (GMKELMEHLKAQLQALFEDVRAMRGALDEQ) form a coiled coil. The segment at 98–175 (RQGGLGVVGN…AGLLGGDGPL (78 aa)) is disordered. Residues 135–146 (PEDEEDDDEEEK) are compositionally biased toward acidic residues.

This chain is Coiled-coil domain-containing protein 184 (CCDC184), found in Bos taurus (Bovine).